A 452-amino-acid polypeptide reads, in one-letter code: Probable glycine dehydrogenase (decarboxylating) subunit 1 (452 aa).

The protein belongs to the GcvP family. N-terminal subunit subfamily. In terms of assembly, the glycine cleavage system is composed of four proteins: P, T, L and H. In this organism, the P 'protein' is a heterodimer of two subunits.

The enzyme catalyses N(6)-[(R)-lipoyl]-L-lysyl-[glycine-cleavage complex H protein] + glycine + H(+) = N(6)-[(R)-S(8)-aminomethyldihydrolipoyl]-L-lysyl-[glycine-cleavage complex H protein] + CO2. The glycine cleavage system catalyzes the degradation of glycine. The P protein binds the alpha-amino group of glycine through its pyridoxal phosphate cofactor; CO(2) is released and the remaining methylamine moiety is then transferred to the lipoamide cofactor of the H protein. The polypeptide is Probable glycine dehydrogenase (decarboxylating) subunit 1 (Alcanivorax borkumensis (strain ATCC 700651 / DSM 11573 / NCIMB 13689 / SK2)).